We begin with the raw amino-acid sequence, 286 residues long: Homoserine kinase (286 aa).

Position 78–88 (78–88) interacts with ATP; it reads PLARGLGSSSS.

Belongs to the GHMP kinase family. Homoserine kinase subfamily.

The protein resides in the cytoplasm. It carries out the reaction L-homoserine + ATP = O-phospho-L-homoserine + ADP + H(+). It participates in amino-acid biosynthesis; L-threonine biosynthesis; L-threonine from L-aspartate: step 4/5. Its function is as follows. Catalyzes the ATP-dependent phosphorylation of L-homoserine to L-homoserine phosphate. The polypeptide is Homoserine kinase (Streptococcus suis (strain 98HAH33)).